Consider the following 258-residue polypeptide: Acetylglutamate kinase (258 aa).

Substrate is bound by residues 44-45 (GG), R66, and N158. Residues 181 to 186 (DVSGIL) and 209 to 211 (IIT) contribute to the ATP site.

It belongs to the acetylglutamate kinase family. ArgB subfamily. Homodimer.

It localises to the cytoplasm. It catalyses the reaction N-acetyl-L-glutamate + ATP = N-acetyl-L-glutamyl 5-phosphate + ADP. The protein operates within amino-acid biosynthesis; L-arginine biosynthesis; N(2)-acetyl-L-ornithine from L-glutamate: step 2/4. Catalyzes the ATP-dependent phosphorylation of N-acetyl-L-glutamate. This chain is Acetylglutamate kinase, found in Shigella flexneri serotype 5b (strain 8401).